We begin with the raw amino-acid sequence, 209 residues long: Large ribosomal subunit protein uL3 (209 aa).

N5-methylglutamine is present on Q150.

The protein belongs to the universal ribosomal protein uL3 family. As to quaternary structure, part of the 50S ribosomal subunit. Forms a cluster with proteins L14 and L19. In terms of processing, methylated by PrmB.

One of the primary rRNA binding proteins, it binds directly near the 3'-end of the 23S rRNA, where it nucleates assembly of the 50S subunit. The sequence is that of Large ribosomal subunit protein uL3 from Vibrio vulnificus (strain YJ016).